Consider the following 417-residue polypeptide: Blood group Rh(D) polypeptide (417 aa).

The next 11 membrane-spanning stretches (helical) occupy residues 12 to 32 (CLPL…YFFT), 44 to 64 (LVAS…GLGF), 77 to 97 (VAFN…LDGF), 107 to 127 (VITL…LISV), 130 to 150 (VLGK…VTAL), 167 to 187 (MNMM…AWCL), 203 to 223 (TIPS…WPSF), 238 to 258 (VFNT…GSSL), 287 to 307 (LIPS…ISVG), 334 to 354 (LLGL…TVGA), and 358 to 378 (MIGF…VIAL).

The protein belongs to the ammonium transporter (TC 2.A.49) family. Rh subfamily. In terms of processing, palmitoylated. Restricted to tissues or cell lines expressing erythroid characters.

Its subcellular location is the cell membrane. May be part of an oligomeric complex which is likely to have a transport or channel function in the erythrocyte membrane. The sequence is that of Blood group Rh(D) polypeptide (RHD) from Homo sapiens (Human).